The chain runs to 110 residues: Cytochrome c oxidase subunit 4B (110 aa).

A run of 3 helical transmembrane segments spans residues 27–47 (YQVL…LTVA), 50–70 (GVGS…QVIF), and 88–108 (LFLY…VTII).

The protein belongs to the cytochrome c oxidase bacterial subunit 4 family.

It localises to the cell membrane. The enzyme catalyses 4 Fe(II)-[cytochrome c] + O2 + 8 H(+)(in) = 4 Fe(III)-[cytochrome c] + 2 H2O + 4 H(+)(out). The chain is Cytochrome c oxidase subunit 4B (ctaF) from Bacillus subtilis (strain 168).